Here is a 221-residue protein sequence, read N- to C-terminus: Probable septum site-determining protein MinC (221 aa).

Belongs to the MinC family. Interacts with MinD and FtsZ.

In terms of biological role, cell division inhibitor that blocks the formation of polar Z ring septums. Rapidly oscillates between the poles of the cell to destabilize FtsZ filaments that have formed before they mature into polar Z rings. Prevents FtsZ polymerization. This chain is Probable septum site-determining protein MinC, found in Shewanella sp. (strain MR-7).